The primary structure comprises 250 residues: Probable transcriptional regulatory protein Ppha_0657 (250 aa).

Belongs to the TACO1 family.

The protein resides in the cytoplasm. The chain is Probable transcriptional regulatory protein Ppha_0657 from Pelodictyon phaeoclathratiforme (strain DSM 5477 / BU-1).